A 141-amino-acid chain; its full sequence is uncharacterized protein (141 aa).

Helical transmembrane passes span 64–84 (IAAV…IEAI) and 112–132 (IVGS…LVLI).

The protein localises to the cell membrane. This is an uncharacterized protein from Sinorhizobium fredii (strain NBRC 101917 / NGR234).